A 1175-amino-acid polypeptide reads, in one-letter code: Beta-agarase AgaO (1175 aa).

An N-terminal signal peptide occupies residues 1–29 (MRLSKSQGILPLAHAVLAAAIAYSTAATA). The region spanning 32 to 164 (YRLEAEDFTN…QWNLDKMELA (133 aa)) is the CBM6 1 domain. The interval 169–208 (SSSSSGGGSTSSSSSGGSSSSSGSGSSSSGGSPEEGGHVS) is disordered. Positions 178–200 (TSSSSSGGSSSSSGSGSSSSGGS) are enriched in low complexity. The 129-residue stretch at 211–339 (FKLEAESAHH…QFNIDYVIFE (129 aa)) folds into the CBM6 2 domain. The disordered stretch occupies residues 355–481 (IADVNDSCPG…ESGCSPSQVA (127 aa)). Basic and acidic residues predominate over residues 382 to 393 (DTDKDGIADNRD). Residues 471–481 (NESGCSPSQVA) show a composition bias toward polar residues. The Proton donor role is filled by Glu-661. The Nucleophile role is filled by Glu-832.

Belongs to the glycosyl hydrolase 86 family.

The catalysed reaction is Hydrolysis of (1-&gt;4)-beta-D-galactosidic linkages in agarose, giving the tetramer as the predominant product.. With respect to regulation, activity and stability are strongly enhanced by CaCl(2). Activity is not affected by sulfhydryl inhibitors such as iodoacetoamide and p-chloromercuribenzoate or by thiol reagents such as dithiothreitol and 2-mercaptoethanol. Strongly inhibited by N-bromosuccinimide and sodium dodecyl sulfate. Its function is as follows. Endo-type beta-agarase, which degrades agarose and agarose oligosaccharides more polymerized than hexamers to yield neoagarohexaose (NA6) as the main product, with lesser amounts of neoagarotetraose (NA4) and neoagarobiose (NA2). The sequence is that of Beta-agarase AgaO from Microbulbifer thermotolerans.